Reading from the N-terminus, the 125-residue chain is Large ribosomal subunit protein bL12 (125 aa).

It belongs to the bacterial ribosomal protein bL12 family. Homodimer. Part of the ribosomal stalk of the 50S ribosomal subunit. Forms a multimeric L10(L12)X complex, where L10 forms an elongated spine to which 2 to 4 L12 dimers bind in a sequential fashion. Binds GTP-bound translation factors.

Functionally, forms part of the ribosomal stalk which helps the ribosome interact with GTP-bound translation factors. Is thus essential for accurate translation. In Caldanaerobacter subterraneus subsp. tengcongensis (strain DSM 15242 / JCM 11007 / NBRC 100824 / MB4) (Thermoanaerobacter tengcongensis), this protein is Large ribosomal subunit protein bL12.